The chain runs to 137 residues: MTLNLRVLSPNRVIWDSEVQEIIISTNSGQMGVLPNHVSLVTAVDIGVMKIRLNGKWSTMALMGGFAKIDKDRITILVNNAERDVDIDLQKAQETFRRAKACLVQAEGKRQVIEADVALKRARTLLEAINASPSDSN.

It belongs to the ATPase epsilon chain family. As to quaternary structure, F-type ATPases have 2 components, CF(1) - the catalytic core - and CF(0) - the membrane proton channel. CF(1) has five subunits: alpha(3), beta(3), gamma(1), delta(1), epsilon(1). CF(0) has three main subunits: a, b and c.

The protein localises to the plastid. It is found in the chloroplast thylakoid membrane. In terms of biological role, produces ATP from ADP in the presence of a proton gradient across the membrane. This chain is ATP synthase epsilon chain, chloroplastic, found in Pinus koraiensis (Korean pine).